Here is a 443-residue protein sequence, read N- to C-terminus: Exodeoxyribonuclease 7 large subunit (443 aa).

Belongs to the XseA family. As to quaternary structure, heterooligomer composed of large and small subunits.

The protein resides in the cytoplasm. It carries out the reaction Exonucleolytic cleavage in either 5'- to 3'- or 3'- to 5'-direction to yield nucleoside 5'-phosphates.. Its function is as follows. Bidirectionally degrades single-stranded DNA into large acid-insoluble oligonucleotides, which are then degraded further into small acid-soluble oligonucleotides. The sequence is that of Exodeoxyribonuclease 7 large subunit from Legionella pneumophila (strain Paris).